Reading from the N-terminus, the 190-residue chain is Holliday junction branch migration complex subunit RuvA (190 aa).

The domain I stretch occupies residues 1-65 (MIGTLSGTVE…DGVSQLYGFA (65 aa)). A domain II region spans residues 66–137 (NREEQNCMRM…LTPQVQKFEL (72 aa)). The segment at 137–141 (LNRFA) is flexible linker. A domain III region spans residues 142 to 190 (ATTRTDSEAVAALLSLGYERTAALGALQKVGVCDSTEDAVRRALLELSK).

It belongs to the RuvA family. As to quaternary structure, homotetramer. Forms an RuvA(8)-RuvB(12)-Holliday junction (HJ) complex. HJ DNA is sandwiched between 2 RuvA tetramers; dsDNA enters through RuvA and exits via RuvB. An RuvB hexamer assembles on each DNA strand where it exits the tetramer. Each RuvB hexamer is contacted by two RuvA subunits (via domain III) on 2 adjacent RuvB subunits; this complex drives branch migration. In the full resolvosome a probable DNA-RuvA(4)-RuvB(12)-RuvC(2) complex forms which resolves the HJ.

It localises to the cytoplasm. Its function is as follows. The RuvA-RuvB-RuvC complex processes Holliday junction (HJ) DNA during genetic recombination and DNA repair, while the RuvA-RuvB complex plays an important role in the rescue of blocked DNA replication forks via replication fork reversal (RFR). RuvA specifically binds to HJ cruciform DNA, conferring on it an open structure. The RuvB hexamer acts as an ATP-dependent pump, pulling dsDNA into and through the RuvAB complex. HJ branch migration allows RuvC to scan DNA until it finds its consensus sequence, where it cleaves and resolves the cruciform DNA. The sequence is that of Holliday junction branch migration complex subunit RuvA from Anaplasma marginale (strain Florida).